Reading from the N-terminus, the 118-residue chain is Endoribonuclease MazF9 (118 aa).

This sequence belongs to the PemK/MazF family. As to quaternary structure, forms a complex with cognate antitoxin MazE9.

Its function is as follows. Toxic component of a type II toxin-antitoxin (TA) system. Upon expression in E.coli and M.smegmatis inhibits cell growth and colony formation. Its toxic effect is neutralized by coexpression with cognate antitoxin MazE9. Acts as an mRNA interferase, specifically cleaving between U and C in UAC sequences. May cleave its cognate antitoxin's gene. In E.coli expression with non-cognate antitoxins VapB27 and VapB40 partially neutralizes the toxin. The chain is Endoribonuclease MazF9 (mazF9) from Mycobacterium tuberculosis (strain ATCC 25618 / H37Rv).